The following is a 170-amino-acid chain: Protein SprT (170 aa).

In terms of domain architecture, SprT-like spans 22–165 (LQLANQHLGT…RQCGEKLQFI (144 aa)). His-78 contacts Zn(2+). Residue Glu-79 is part of the active site. Residue His-82 coordinates Zn(2+).

The protein belongs to the SprT family. Requires Zn(2+) as cofactor.

The protein resides in the cytoplasm. This Yersinia pseudotuberculosis serotype O:1b (strain IP 31758) protein is Protein SprT.